Here is a 449-residue protein sequence, read N- to C-terminus: Signal recognition particle protein (449 aa).

Residues 109-116, 191-195, and 249-252 each bind GTP; these read GLQGGGKT, DTAGR, and SRID.

It belongs to the GTP-binding SRP family. SRP54 subfamily. In terms of assembly, part of the signal recognition particle protein translocation system, which is composed of SRP and FtsY. SRP is a ribonucleoprotein composed of Ffh and a 4.5S RNA molecule.

Its subcellular location is the cytoplasm. The enzyme catalyses GTP + H2O = GDP + phosphate + H(+). In terms of biological role, involved in targeting and insertion of nascent membrane proteins into the cytoplasmic membrane. Binds to the hydrophobic signal sequence of the ribosome-nascent chain (RNC) as it emerges from the ribosomes. The SRP-RNC complex is then targeted to the cytoplasmic membrane where it interacts with the SRP receptor FtsY. Interaction with FtsY leads to the transfer of the RNC complex to the Sec translocase for insertion into the membrane, the hydrolysis of GTP by both Ffh and FtsY, and the dissociation of the SRP-FtsY complex into the individual components. This Rickettsia typhi (strain ATCC VR-144 / Wilmington) protein is Signal recognition particle protein.